The sequence spans 325 residues: Phenylalanine--tRNA ligase alpha subunit (325 aa).

Glutamate 251 is a binding site for Mg(2+).

This sequence belongs to the class-II aminoacyl-tRNA synthetase family. Phe-tRNA synthetase alpha subunit type 1 subfamily. As to quaternary structure, tetramer of two alpha and two beta subunits. The cofactor is Mg(2+).

The protein localises to the cytoplasm. The catalysed reaction is tRNA(Phe) + L-phenylalanine + ATP = L-phenylalanyl-tRNA(Phe) + AMP + diphosphate + H(+). This chain is Phenylalanine--tRNA ligase alpha subunit, found in Thermotoga petrophila (strain ATCC BAA-488 / DSM 13995 / JCM 10881 / RKU-1).